Here is a 754-residue protein sequence, read N- to C-terminus: Phosphoribosylformylglycinamidine synthase subunit PurL (754 aa).

His-52 is an active-site residue. Tyr-55 and Lys-95 together coordinate ATP. Glu-97 is a binding site for Mg(2+). Substrate is bound by residues 98–101 and Arg-120; that span reads SHNH. The Proton acceptor role is filled by His-99. Asp-121 lines the Mg(2+) pocket. Residue Gln-244 coordinates substrate. Position 272 (Asp-272) interacts with Mg(2+). 316–318 is a substrate binding site; that stretch reads ESQ. Residues Asn-504 and Gly-541 each contribute to the ATP site. A Mg(2+)-binding site is contributed by Asn-542. A substrate-binding site is contributed by Ser-544.

It belongs to the FGAMS family. In terms of assembly, monomer. Part of the FGAM synthase complex composed of 1 PurL, 1 PurQ and 2 PurS subunits.

It localises to the cytoplasm. The catalysed reaction is N(2)-formyl-N(1)-(5-phospho-beta-D-ribosyl)glycinamide + L-glutamine + ATP + H2O = 2-formamido-N(1)-(5-O-phospho-beta-D-ribosyl)acetamidine + L-glutamate + ADP + phosphate + H(+). It functions in the pathway purine metabolism; IMP biosynthesis via de novo pathway; 5-amino-1-(5-phospho-D-ribosyl)imidazole from N(2)-formyl-N(1)-(5-phospho-D-ribosyl)glycinamide: step 1/2. In terms of biological role, part of the phosphoribosylformylglycinamidine synthase complex involved in the purines biosynthetic pathway. Catalyzes the ATP-dependent conversion of formylglycinamide ribonucleotide (FGAR) and glutamine to yield formylglycinamidine ribonucleotide (FGAM) and glutamate. The FGAM synthase complex is composed of three subunits. PurQ produces an ammonia molecule by converting glutamine to glutamate. PurL transfers the ammonia molecule to FGAR to form FGAM in an ATP-dependent manner. PurS interacts with PurQ and PurL and is thought to assist in the transfer of the ammonia molecule from PurQ to PurL. This is Phosphoribosylformylglycinamidine synthase subunit PurL from Salinibacter ruber (strain DSM 13855 / M31).